The chain runs to 220 residues: Probable nicotinate-nucleotide adenylyltransferase (220 aa).

It belongs to the NadD family.

The enzyme catalyses nicotinate beta-D-ribonucleotide + ATP + H(+) = deamido-NAD(+) + diphosphate. The protein operates within cofactor biosynthesis; NAD(+) biosynthesis; deamido-NAD(+) from nicotinate D-ribonucleotide: step 1/1. Functionally, catalyzes the reversible adenylation of nicotinate mononucleotide (NaMN) to nicotinic acid adenine dinucleotide (NaAD). This is Probable nicotinate-nucleotide adenylyltransferase from Yersinia pseudotuberculosis serotype O:1b (strain IP 31758).